The primary structure comprises 185 residues: HTH-type transcriptional regulator Hpr (185 aa).

The HTH marR-type domain occupies 13–157; the sequence is AMIFSQRIAQ…LIAILRNIYG (145 aa). The segment at residues 63–86 is a DNA-binding region (H-T-H motif); sequence ISEIAKFGVMHVSTAFNFSKKLEE.

As to quaternary structure, homodimer.

In terms of biological role, negative regulator of protease production and sporulation. This is HTH-type transcriptional regulator Hpr from Bacillus mycoides (strain KBAB4) (Bacillus weihenstephanensis).